Consider the following 1814-residue polypeptide: U3 small nucleolar RNA-associated protein 10 (1814 aa).

An HEAT 1 repeat occupies 583–620; it reads LDFQALLPFLLVALTDASERVRREAAAALAAVGSLYKK. 2 helical membrane-spanning segments follow: residues 942-962 and 998-1018; these read IQSGMSYLLSLTLGSLLAIVN and ALLLVAGLSVIAPELVLHSVM. HEAT repeat units follow at residues 1042 to 1079, 1249 to 1286, 1293 to 1331, and 1770 to 1807; these read QTIDQVVPALIQSLRDQKRDVVSGTSELLLSFTAAFEH, LTLVDFLDTIEVLLERPNDELRRKVLRLLEGRLRQNPE, IRVLDFLPTLVDIIRNSADILLKHAAVACIDRIAEKYGK, and ALLPEMLPYISELMEDEDENVEREVRKWVKQIENVLGE.

The protein belongs to the HEATR1/UTP10 family. In terms of assembly, component of the ribosomal small subunit (SSU) processome.

The protein resides in the nucleus. Its subcellular location is the nucleolus. The protein localises to the membrane. Its function is as follows. Involved in nucleolar processing of pre-18S ribosomal RNA. Involved in ribosome biosynthesis. The protein is U3 small nucleolar RNA-associated protein 10 of Neosartorya fischeri (strain ATCC 1020 / DSM 3700 / CBS 544.65 / FGSC A1164 / JCM 1740 / NRRL 181 / WB 181) (Aspergillus fischerianus).